Here is a 132-residue protein sequence, read N- to C-terminus: Glycine cleavage system H protein (132 aa).

The 83-residue stretch at 24-106 (LVRIGISAFA…HGEGWLLVVR (83 aa)) folds into the Lipoyl-binding domain. Lys65 carries the post-translational modification N6-lipoyllysine.

The protein belongs to the GcvH family. In terms of assembly, the glycine cleavage system is composed of four proteins: P, T, L and H. (R)-lipoate is required as a cofactor.

Its function is as follows. The glycine cleavage system catalyzes the degradation of glycine. The H protein shuttles the methylamine group of glycine from the P protein to the T protein. The protein is Glycine cleavage system H protein of Prochlorococcus marinus (strain MIT 9313).